The chain runs to 352 residues: MSEGIAGSGIELGITLYSLTSEFAAGLYTPETLIKAVADEGLGPGVEFNIAQMLRTYPDVDDDFVKLWRDSMDRYGLTPSAVGTNLDMGRRKDRDMTPDEEYDFFAAQLRTANKLGFHRVVIRSAGKELLRRLLPLAEKYDQKLGYEIHAPQGPNDPKILQIREMYAELGSDRLGFTADFSSTMHSLSPTLFRTLTQMGLPEEHFAVMQDIWRKPLPMQERNQEFEDYLRANNFDPAQLGPFTRLAFNMHGLVPPEEWLDIMPQIFHVHAKFYDIDENGNEPAMDIPRIVRQFVKGGYRGYLSSEWEGHAFADLGESDPIDLVKKQHSLMRRAIEEAVDPTVSQPALVETAK.

Glu-147 lines the Mn(2+) pocket. Catalysis depends on His-149, which acts as the Proton acceptor. 3 residues coordinate Mn(2+): Asp-179, His-269, and Glu-305.

It belongs to the C-glycoside deglycosidase alpha subunit family. Heterodimer composed of an alpha subunit (CarB2) and a beta subunit (CarC2). The cofactor is a divalent metal cation.

The enzyme catalyses 3''-dehydroorientin = 1,5-anhydro-D-erythro-hex-1-en-3-ulose + luteolin. With respect to regulation, activity is strongly reduced in the presence of chelating agents. Carbon-carbon bond-cleaving enzyme which participates in the metabolism of C-glycosides. Acts on the C8-glycosylated compound 3''-dehydroorientin (3''-oxo-orientin). This chain is C-glycoside deglycosidase alpha subunit, found in Arthrobacter globiformis (strain ATCC 8010 / DSM 20124 / JCM 1332 / NBRC 12137 / NCIMB 8907 / NRRL B-2979 / 168).